Here is a 165-residue protein sequence, read N- to C-terminus: uncharacterized protein (165 aa).

Residues 4–26 form a helical membrane-spanning segment; sequence FVIGTMIALAGLLVGGGVGSYFT.

Its subcellular location is the membrane. This is an uncharacterized protein from Aquifex aeolicus (strain VF5).